Consider the following 287-residue polypeptide: Elongation factor Ts (287 aa).

The segment at 80-83 (TDFL) is involved in Mg(2+) ion dislocation from EF-Tu.

This sequence belongs to the EF-Ts family.

Its subcellular location is the cytoplasm. Functionally, associates with the EF-Tu.GDP complex and induces the exchange of GDP to GTP. It remains bound to the aminoacyl-tRNA.EF-Tu.GTP complex up to the GTP hydrolysis stage on the ribosome. The chain is Elongation factor Ts from Pseudomonas fluorescens (strain Pf0-1).